The chain runs to 321 residues: GDP-L-fucose synthase (321 aa).

14 to 20 lines the NADP(+) pocket; the sequence is GGSGLVG. The active-site Proton donor/acceptor is Tyr143. NADP(+) contacts are provided by residues Lys147, 170-173, and His186; that span reads PTNV. Substrate is bound by residues Lys194, Trp208, Arg215, and Asp277.

This sequence belongs to the NAD(P)-dependent epimerase/dehydratase family. Fucose synthase subfamily. As to quaternary structure, homodimer.

It carries out the reaction GDP-beta-L-fucose + NADP(+) = GDP-4-dehydro-alpha-D-rhamnose + NADPH + H(+). It participates in nucleotide-sugar biosynthesis; GDP-L-fucose biosynthesis via de novo pathway; GDP-L-fucose from GDP-alpha-D-mannose: step 2/2. In terms of biological role, catalyzes the two-step NADP-dependent conversion of GDP-4-dehydro-6-deoxy-D-mannose to GDP-fucose, involving an epimerase and a reductase reaction. The chain is GDP-L-fucose synthase (GFUS) from Cricetulus griseus (Chinese hamster).